Consider the following 201-residue polypeptide: Dermatopontin (201 aa).

An N-terminal signal peptide occupies residues 1–18 (MDLSLLWVLLPLVTMAWG). Gln19 is subject to Pyrrolidone carboxylic acid. Position 23 is a sulfotyrosine (Tyr23). Repeat copies occupy residues 26-79 (PYQQ…ACMP), 70-75 (DRQWNY), 80-135 (TPQS…CCRY), and 125-130 (DREWQF). The segment at 26–186 (PYQQYHDYSD…AVERDRQWKF (161 aa)) is 2 X 53-55 AA tandem repeats. 5 disulfide bridges follow: Cys50–Cys77, Cys90–Cys132, Cys106–Cys133, Cys139–Cys196, and Cys143–Cys189. Residues 70 to 186 (DRQWNYACMP…AVERDRQWKF (117 aa)) are 3 X 6 AA repeats of D-R-[EQ]-W-[NQK]-[FY]. Residues Tyr162, Tyr164, Tyr166, and Tyr167 each carry the sulfotyrosine modification. The stretch at 181 to 186 (DRQWKF) is one 3-3 repeat. Position 194 is a sulfotyrosine (Tyr194).

The protein belongs to the dermatopontin family. In terms of assembly, interacts with TGFB1, DCN and collagen. Sulfated on tyrosine residue(s). As to expression, expressed in fibroblasts, heart, skeletal muscle, brain and pancreas. Expressed at an intermediate level in lung and kidney, and at a low level in liver and placenta. Expressed at a lower level in fibroblasts from hypertrophic scar lesional skin and in fibroblasts from patients with systemic sclerosis than in normal skin fibroblasts.

It is found in the secreted. Its subcellular location is the extracellular space. The protein localises to the extracellular matrix. In terms of biological role, seems to mediate adhesion by cell surface integrin binding. May serve as a communication link between the dermal fibroblast cell surface and its extracellular matrix environment. Enhances TGFB1 activity. Inhibits cell proliferation. Accelerates collagen fibril formation, and stabilizes collagen fibrils against low-temperature dissociation. This is Dermatopontin (DPT) from Homo sapiens (Human).